We begin with the raw amino-acid sequence, 406 residues long: UPF0754 membrane protein CYB_2931 (406 aa).

Helical transmembrane passes span 1-21 (MAFW…YFTN) and 385-405 (IVNL…LFLL).

Belongs to the UPF0754 family.

Its subcellular location is the cell inner membrane. The protein is UPF0754 membrane protein CYB_2931 of Synechococcus sp. (strain JA-2-3B'a(2-13)) (Cyanobacteria bacterium Yellowstone B-Prime).